The sequence spans 595 residues: Aspartate--tRNA(Asp/Asn) ligase (595 aa).

Glu175 contacts L-aspartate. Residues Gln199–Lys202 form an aspartate region. Residues Arg221 and His454 each contribute to the L-aspartate site. Arg221–Glu223 contributes to the ATP binding site. Residue Glu488 coordinates ATP. Arg495 lines the L-aspartate pocket. Gly540–Arg543 lines the ATP pocket.

The protein belongs to the class-II aminoacyl-tRNA synthetase family. Type 1 subfamily. As to quaternary structure, homodimer.

It is found in the cytoplasm. The enzyme catalyses tRNA(Asx) + L-aspartate + ATP = L-aspartyl-tRNA(Asx) + AMP + diphosphate. Its function is as follows. Aspartyl-tRNA synthetase with relaxed tRNA specificity since it is able to aspartylate not only its cognate tRNA(Asp) but also tRNA(Asn). Reaction proceeds in two steps: L-aspartate is first activated by ATP to form Asp-AMP and then transferred to the acceptor end of tRNA(Asp/Asn). In Brucella abortus (strain S19), this protein is Aspartate--tRNA(Asp/Asn) ligase.